Reading from the N-terminus, the 403-residue chain is Na(+)-translocating NADH-quinone reductase subunit B (403 aa).

A run of 4 helical transmembrane segments spans residues M56 to G76, A121 to F141, L164 to G184, and F195 to A212. T230 is modified (FMN phosphoryl threonine). The next 6 helical transmembrane spans lie at A237–I257, T265–W285, I287–S307, M312–F332, W348–F368, and G371–V391.

This sequence belongs to the NqrB/RnfD family. As to quaternary structure, composed of six subunits; NqrA, NqrB, NqrC, NqrD, NqrE and NqrF. The cofactor is FMN.

Its subcellular location is the cell inner membrane. It carries out the reaction a ubiquinone + n Na(+)(in) + NADH + H(+) = a ubiquinol + n Na(+)(out) + NAD(+). Its function is as follows. NQR complex catalyzes the reduction of ubiquinone-1 to ubiquinol by two successive reactions, coupled with the transport of Na(+) ions from the cytoplasm to the periplasm. NqrA to NqrE are probably involved in the second step, the conversion of ubisemiquinone to ubiquinol. In Azotobacter vinelandii (strain DJ / ATCC BAA-1303), this protein is Na(+)-translocating NADH-quinone reductase subunit B.